The sequence spans 404 residues: Cysteine desulfurase IscS (404 aa).

Residues 75–76 (AT), asparagine 155, glutamine 183, and 203–205 (SAH) contribute to the pyridoxal 5'-phosphate site. The residue at position 206 (lysine 206) is an N6-(pyridoxal phosphate)lysine. Threonine 243 is a pyridoxal 5'-phosphate binding site. Cysteine 328 serves as the catalytic Cysteine persulfide intermediate. Cysteine 328 contributes to the [2Fe-2S] cluster binding site.

Belongs to the class-V pyridoxal-phosphate-dependent aminotransferase family. NifS/IscS subfamily. In terms of assembly, homodimer. Forms a heterotetramer with IscU, interacts with other sulfur acceptors. Requires pyridoxal 5'-phosphate as cofactor.

Its subcellular location is the cytoplasm. The enzyme catalyses (sulfur carrier)-H + L-cysteine = (sulfur carrier)-SH + L-alanine. It functions in the pathway cofactor biosynthesis; iron-sulfur cluster biosynthesis. Its function is as follows. Master enzyme that delivers sulfur to a number of partners involved in Fe-S cluster assembly, tRNA modification or cofactor biosynthesis. Catalyzes the removal of elemental sulfur atoms from cysteine to produce alanine. Functions as a sulfur delivery protein for Fe-S cluster synthesis onto IscU, an Fe-S scaffold assembly protein, as well as other S acceptor proteins. This is Cysteine desulfurase IscS from Pseudomonas fluorescens (strain SBW25).